The primary structure comprises 143 residues: Putative pre-16S rRNA nuclease (143 aa).

It belongs to the YqgF nuclease family.

It localises to the cytoplasm. Its function is as follows. Could be a nuclease involved in processing of the 5'-end of pre-16S rRNA. In Lactococcus lactis subsp. cremoris (strain SK11), this protein is Putative pre-16S rRNA nuclease.